A 260-amino-acid chain; its full sequence is Cytosolic Fe-S cluster assembly factor Nubp2 homolog (260 aa).

14–21 (GKGGVGKS) lines the ATP pocket. Residues cysteine 188 and cysteine 191 each coordinate [4Fe-4S] cluster.

This sequence belongs to the Mrp/NBP35 ATP-binding proteins family. NUBP2/CFD1 subfamily. Heterotetramer of 2 Nubp1 and 2 Nubp2 chains. It depends on [4Fe-4S] cluster as a cofactor.

The protein localises to the cytoplasm. In terms of biological role, component of the cytosolic iron-sulfur (Fe/S) protein assembly (CIA) machinery. Required for maturation of extramitochondrial Fe-S proteins. The Nubp1-Nubp2 heterotetramer forms a Fe-S scaffold complex, mediating the de novo assembly of an Fe-S cluster and its transfer to target apoproteins. This chain is Cytosolic Fe-S cluster assembly factor Nubp2 homolog, found in Drosophila sechellia (Fruit fly).